Reading from the N-terminus, the 315-residue chain is MIDLCVLGTTGGMPMVDKYLSATLININGRKILIDCGEGTQVAMRKIGWGFKSVDLICITHSHGDHTIGLPGLISIMGNSGRTEKVTVVGPKGIKEIVNGLNVINPYLPYELEIIELENNDLKFIIDKNNMSLCEDNNKCNLILSSLEVEHSAKCLSYSFYIKRRPRFSVEKASKNNVPKPLWSKLQNQEIINYDNKIYTPDLVLDNARKGIKISYVTDTRPISAIPEFIKYSDLFICEGTYGSDEDIDKAIKNKHMTFRESATLALNGECKELILTHFSPALSEPESFVDNAKQVFHNSSVAYDGLIKTLKFID.

The Zn(2+) site is built by His-61, His-63, Asp-65, His-66, His-151, Asp-219, and His-278. Asp-65 functions as the Proton acceptor in the catalytic mechanism.

This sequence belongs to the RNase Z family. In terms of assembly, homodimer. Requires Zn(2+) as cofactor.

The enzyme catalyses Endonucleolytic cleavage of RNA, removing extra 3' nucleotides from tRNA precursor, generating 3' termini of tRNAs. A 3'-hydroxy group is left at the tRNA terminus and a 5'-phosphoryl group is left at the trailer molecule.. Its function is as follows. Zinc phosphodiesterase, which displays some tRNA 3'-processing endonuclease activity. Probably involved in tRNA maturation, by removing a 3'-trailer from precursor tRNA. This chain is Ribonuclease Z, found in Clostridium botulinum (strain Eklund 17B / Type B).